A 93-amino-acid chain; its full sequence is RNA-binding protein Hfq (93 aa).

The region spanning 9–68 (DPFLNALRKERIPVSIFLVNGIKLQGQIESFDQYVVLLKNAVSQMVYKHAISTVVPARNP) is the Sm domain. Low complexity predominate over residues 74 to 86 (PAMAAGATAAPAA). The segment at 74–93 (PAMAAGATAAPAADEGYGNQ) is disordered.

The protein belongs to the Hfq family. In terms of assembly, homohexamer.

RNA chaperone that binds small regulatory RNA (sRNAs) and mRNAs to facilitate mRNA translational regulation in response to envelope stress, environmental stress and changes in metabolite concentrations. Also binds with high specificity to tRNAs. In Alcanivorax borkumensis (strain ATCC 700651 / DSM 11573 / NCIMB 13689 / SK2), this protein is RNA-binding protein Hfq.